A 376-amino-acid polypeptide reads, in one-letter code: Glutamate 5-kinase (376 aa).

Position 15 (Lys-15) interacts with ATP. Ser-56, Asp-143, and Asn-155 together coordinate substrate. 175-176 (SD) serves as a coordination point for ATP. Positions 281–358 (KGTLTIDAGA…PDVMMILGIT (78 aa)) constitute a PUA domain.

The protein belongs to the glutamate 5-kinase family.

It localises to the cytoplasm. It catalyses the reaction L-glutamate + ATP = L-glutamyl 5-phosphate + ADP. The protein operates within amino-acid biosynthesis; L-proline biosynthesis; L-glutamate 5-semialdehyde from L-glutamate: step 1/2. In terms of biological role, catalyzes the transfer of a phosphate group to glutamate to form L-glutamate 5-phosphate. The chain is Glutamate 5-kinase from Rhodopseudomonas palustris (strain ATCC BAA-98 / CGA009).